A 593-amino-acid polypeptide reads, in one-letter code: NADH-quinone oxidoreductase subunit C/D 1 (593 aa).

The NADH dehydrogenase I subunit C stretch occupies residues 1 to 193 (MPWAKEGDLQ…DNLEGLMNYD (193 aa)). Residues 217 to 593 (AQIVLNWGPL…IDPVVGETDR (377 aa)) are NADH dehydrogenase I subunit D.

This sequence in the N-terminal section; belongs to the complex I 30 kDa subunit family. In the C-terminal section; belongs to the complex I 49 kDa subunit family. In terms of assembly, NDH-1 is composed of 13 different subunits. Subunits NuoB, CD, E, F, and G constitute the peripheral sector of the complex.

The protein resides in the cell inner membrane. The enzyme catalyses a quinone + NADH + 5 H(+)(in) = a quinol + NAD(+) + 4 H(+)(out). Its function is as follows. NDH-1 shuttles electrons from NADH, via FMN and iron-sulfur (Fe-S) centers, to quinones in the respiratory chain. The immediate electron acceptor for the enzyme in this species is believed to be ubiquinone. Couples the redox reaction to proton translocation (for every two electrons transferred, four hydrogen ions are translocated across the cytoplasmic membrane), and thus conserves the redox energy in a proton gradient. This chain is NADH-quinone oxidoreductase subunit C/D 1 (nuoC1), found in Aquifex aeolicus (strain VF5).